Consider the following 844-residue polypeptide: Saxiphilin (844 aa).

Residues 1–19 form the signal peptide; sequence MAPTFQTALFFTIISLSFA. The Transferrin-like 1; first part domain maps to 26-106; that stretch reads VRWCAISDLE…IAEPYSSNRD (81 aa). Disulfide bonds link cysteine 29/cysteine 64, cysteine 39/cysteine 55, cysteine 110/cysteine 130, cysteine 141/cysteine 148, cysteine 150/cysteine 172, cysteine 180/cysteine 202, cysteine 222/cysteine 244, cysteine 277/cysteine 360, cysteine 322/cysteine 335, cysteine 332/cysteine 343, cysteine 388/cysteine 402, cysteine 495/cysteine 527, cysteine 505/cysteine 518, cysteine 552/cysteine 839, cysteine 570/cysteine 799, cysteine 607/cysteine 685, cysteine 641/cysteine 655, cysteine 652/cysteine 668, and cysteine 725/cysteine 739. 2 Thyroglobulin type-1 domains span residues 107 to 172 and 177 to 244; these read LQKC…RATC and LPKC…PATC. Residues 109 to 249 are absent in transferrins; it reads KCLKERQQAL…IPATCQKHDL (141 aa). Residues 245–482 enclose the Transferrin-like 1; second part domain; sequence QKHDLVTTCH…LFHAMKALTG (238 aa). A Transferrin-like 2 domain is found at 492–828; it reads VRWCTINKLE…YYTTVYGASR (337 aa).

The protein belongs to the transferrin family. In terms of assembly, monomer. As to expression, plasma. Highest levels of transcripts found in the liver, the lung, the pancreas and the brain.

It localises to the secreted. Its function is as follows. Binds specifically to the neurotoxin saxitoxin. Its physiological role may be to transport or sequester an endogenous organic molecule other than Fe(3+). It may participate in a detoxification mechanism for neutralizing a microbial toxin. The protein is Saxiphilin of Aquarana catesbeiana (American bullfrog).